A 106-amino-acid polypeptide reads, in one-letter code: uncharacterized protein (106 aa).

Transmembrane regions (helical) follow at residues 4–24, 27–47, and 78–98; these read LPVVIISIVLFFVLFFGIGFL, MLLRMSWIMAVIYPIVCLFII, and VLILVSGLAGAIVSGIAINML.

It localises to the cell membrane. This is an uncharacterized protein from Bacillus subtilis (strain 168).